Consider the following 430-residue polypeptide: Serine--tRNA ligase (430 aa).

L-serine is bound at residue 237–239 (TAE). 268 to 270 (RSE) is an ATP binding site. Glu291 serves as a coordination point for L-serine. 355 to 358 (EISS) provides a ligand contact to ATP. Ser391 serves as a coordination point for L-serine.

The protein belongs to the class-II aminoacyl-tRNA synthetase family. Type-1 seryl-tRNA synthetase subfamily. As to quaternary structure, homodimer. The tRNA molecule binds across the dimer.

Its subcellular location is the cytoplasm. It carries out the reaction tRNA(Ser) + L-serine + ATP = L-seryl-tRNA(Ser) + AMP + diphosphate + H(+). The catalysed reaction is tRNA(Sec) + L-serine + ATP = L-seryl-tRNA(Sec) + AMP + diphosphate + H(+). Its pathway is aminoacyl-tRNA biosynthesis; selenocysteinyl-tRNA(Sec) biosynthesis; L-seryl-tRNA(Sec) from L-serine and tRNA(Sec): step 1/1. Its function is as follows. Catalyzes the attachment of serine to tRNA(Ser). Is also able to aminoacylate tRNA(Sec) with serine, to form the misacylated tRNA L-seryl-tRNA(Sec), which will be further converted into selenocysteinyl-tRNA(Sec). The polypeptide is Serine--tRNA ligase (Salmonella paratyphi C (strain RKS4594)).